A 394-amino-acid chain; its full sequence is Tryptophan synthase beta chain (394 aa).

Lysine 90 carries the N6-(pyridoxal phosphate)lysine modification.

This sequence belongs to the TrpB family. Tetramer of two alpha and two beta chains. It depends on pyridoxal 5'-phosphate as a cofactor.

The enzyme catalyses (1S,2R)-1-C-(indol-3-yl)glycerol 3-phosphate + L-serine = D-glyceraldehyde 3-phosphate + L-tryptophan + H2O. The protein operates within amino-acid biosynthesis; L-tryptophan biosynthesis; L-tryptophan from chorismate: step 5/5. In terms of biological role, the beta subunit is responsible for the synthesis of L-tryptophan from indole and L-serine. This is Tryptophan synthase beta chain from Parabacteroides distasonis (strain ATCC 8503 / DSM 20701 / CIP 104284 / JCM 5825 / NCTC 11152).